The sequence spans 483 residues: Probable cytochrome P450 517A4 (483 aa).

The chain crosses the membrane as a helical span at residues 1 to 21; sequence MEIVNVLLFLIILFLVKDFVK. Residue Cys429 participates in heme binding.

Belongs to the cytochrome P450 family. Requires heme as cofactor.

It localises to the membrane. In Dictyostelium discoideum (Social amoeba), this protein is Probable cytochrome P450 517A4 (cyp517A4).